The primary structure comprises 518 residues: Metalloprotease TIKI2 (518 aa).

An N-terminal signal peptide occupies residues 1–22 (MNCQSGLRWLVTLCAFFQVGSA). Residues 23-499 (RDTHESTRQC…SALDSAAPNP (477 aa)) lie on the Extracellular side of the membrane. N-linked (GlcNAc...) asparagine glycans are attached at residues asparagine 224, asparagine 233, asparagine 282, asparagine 325, and asparagine 340. A helical transmembrane segment spans residues 500 to 517 (TYALTCFLACLISQLLFA). Serine 518 is a topological domain (cytoplasmic).

This sequence belongs to the TIKI family. Requires Mn(2+) as cofactor. Co(2+) serves as cofactor.

The protein resides in the cell membrane. Functionally, metalloprotease that acts as a negative regulator of the Wnt signaling pathway by mediating the cleavage of the N-terminal residues of a subset of Wnt proteins. Following cleavage, Wnt proteins become oxidized and form large disulfide-bond oligomers, leading to their inactivation. This Danio rerio (Zebrafish) protein is Metalloprotease TIKI2 (trabd2b).